The primary structure comprises 622 residues: Iron transport multicopper oxidase fetC (622 aa).

Residues 1-20 form the signal peptide; it reads MARLVHLTAVLAASIRLAAA. Residues 21-552 lie on the Extracellular side of the membrane; sequence ATINHDFNVT…DPLPAGFTTR (532 aa). N-linked (GlcNAc...) asparagine glycosylation is found at Asn28 and Asn74. 2 Plastocyanin-like domains span residues 29 to 144 and 154 to 301; these read VTWV…VHDP and EEIV…SYDK. Residues His80 and His82 each contribute to the Cu cation site. N-linked (GlcNAc...) asparagine glycosylation is found at Asn87 and Asn112. Residues His124 and His126 each coordinate Cu cation. Asn194, Asn198, Asn265, Asn292, and Asn358 each carry an N-linked (GlcNAc...) asparagine glycan. The Plastocyanin-like 3 domain maps to 362 to 497; that stretch reads KSPKVPTLYS…GLVATFVEAP (136 aa). Residues His412, His415, and His417 each coordinate Cu cation. Residue Asn428 is glycosylated (N-linked (GlcNAc...) asparagine). Residues His478, Cys479, His480, and His484 each contribute to the Cu cation site. A helical transmembrane segment spans residues 553–573; that stretch reads GIVALVFSCVTGILGICVVAW. The Cytoplasmic portion of the chain corresponds to 574-622; sequence YGMSQPLEEATAAVATLVREAQVTGSGTSPNHDDGNAAATEAGVLRRRT. Residues 597–622 form a disordered region; the sequence is TGSGTSPNHDDGNAAATEAGVLRRRT.

It belongs to the multicopper oxidase family.

It localises to the cell membrane. In terms of biological role, cell surface ferroxidase; part of the reductive iron assimilatory system (RIA), a siderophore-independent high affinity iron uptake mechanism. Required to oxidize Fe(2+) and release it from the transporter. The chain is Iron transport multicopper oxidase fetC from Epichloe festucae (strain E2368).